Consider the following 384-residue polypeptide: Prokineticin receptor 2 (384 aa).

Topologically, residues 1–54 are extracellular; sequence MAAQNGNTSFTPNFNPPQDHASSLSFNFSYGDYDLPMDEDEDMTKTRTFFAAKI. 2 N-linked (GlcNAc...) asparagine glycosylation sites follow: Asn7 and Asn27. The chain crosses the membrane as a helical span at residues 55–75; it reads VIGIALAGIMLVCGIGNFVFI. At 76-89 the chain is on the cytoplasmic side; that stretch reads AALTRYKKLRNLTN. The helical transmembrane segment at 90-110 threads the bilayer; that stretch reads LLIANLAISDFLVAIICCPFE. Residues 111-136 are Extracellular-facing; it reads MDYYVVRQLSWEHGHVLCASVNYLRT. The cysteines at positions 128 and 208 are disulfide-linked. The helical transmembrane segment at 137–157 threads the bilayer; it reads VSLYVSTNALLAIAIDRYLAI. The Cytoplasmic portion of the chain corresponds to 158-171; sequence VHPLKPRMNYQTAS. The chain crosses the membrane as a helical span at residues 172 to 192; it reads FLIALVWMVSILIAIPSAYFA. Residues 193-223 lie on the Extracellular side of the membrane; that stretch reads TETVLFIVKSQEKIFCGQIWPVDQQLYYKSY. A helical membrane pass occupies residues 224-244; it reads FLFIFGVEFVGPVVTMTLCYA. The Cytoplasmic segment spans residues 245–273; the sequence is RISRELWFKAVPGFQTEQIRKRLRCRRKT. A helical membrane pass occupies residues 274-294; the sequence is VLVLMCILTAYVLCWAPFYGF. The Extracellular segment spans residues 295 to 313; that stretch reads TIVRDFFPTVFVKEKHYLT. Residues 314 to 334 traverse the membrane as a helical segment; that stretch reads AFYVVECIAMSNSMINTVCFV. Topologically, residues 335 to 384 are cytoplasmic; the sequence is TVKNNTMKYFKKMMLLHWRPSQRGSKSSADLDLRTNGVPTTEEVDCIRLK.

Belongs to the G-protein coupled receptor 1 family. In terms of assembly, homodimer. In terms of tissue distribution, expressed in the ileocecum, thyroid gland, pituitary gland, salivary gland, adrenal gland, testis, ovary and brain.

The protein localises to the cell membrane. In terms of biological role, receptor for prokineticin 2. Exclusively coupled to the G(q) subclass of heteromeric G proteins. Activation leads to mobilization of calcium, stimulation of phosphoinositide turnover and activation of p44/p42 mitogen-activated protein kinase. This chain is Prokineticin receptor 2 (PROKR2), found in Homo sapiens (Human).